A 420-amino-acid chain; its full sequence is Tubulin epsilon and delta complex protein 1 (420 aa).

Positions 276–340 form a coiled coil; that stretch reads SEGGLGELES…AVQQELAALQ (65 aa). Over residues 342 to 351 the composition is skewed to polar residues; that stretch reads SWEQSSTPGQ. A disordered region spans residues 342 to 369; sequence SWEQSSTPGQPQRPHRLVRSKDGAPRPQ. A coiled-coil region spans residues 377–409; the sequence is IRTLSAKEACLKKALHQLQRQCQQELARLAGAL.

As to quaternary structure, interacts with TEDC2. Found in a complex with TEDC1, TEDC2, TUBE1 and TUBD1.

The protein localises to the cell projection. The protein resides in the cilium. Its subcellular location is the cytoplasm. It is found in the cytoskeleton. It localises to the microtubule organizing center. The protein localises to the centrosome. The protein resides in the centriole. Its function is as follows. Acts as a positive regulator of ciliary hedgehog signaling. Required for centriole stability. May play a role in counteracting perturbation of actin filaments, such as after treatment with the actin depolymerizing microbial metabolite Chivosazole F. This chain is Tubulin epsilon and delta complex protein 1, found in Mus musculus (Mouse).